Consider the following 181-residue polypeptide: Putative manganese efflux pump MntP (181 aa).

The next 6 helical transmembrane spans lie at 3–23 (LIFL…ANGA), 42–62 (IFQA…VGFI), 63–83 (SYID…KMIK), 101–121 (LMLG…TFSF), 124–144 (INIA…CVIA), and 160–180 (LVLG…THLI).

Belongs to the MntP (TC 9.B.29) family.

The protein localises to the cell inner membrane. Functionally, probably functions as a manganese efflux pump. The protein is Putative manganese efflux pump MntP of Campylobacter fetus subsp. fetus (strain 82-40).